Here is a 449-residue protein sequence, read N- to C-terminus: NADP-specific glutamate dehydrogenase (449 aa).

Residues K92, Q113, and K116 each contribute to the substrate site. K128 acts as the Proton donor in catalysis. A substrate-binding site is contributed by G167. Positions 211 and 242 each coordinate NADP(+). S380 is a binding site for substrate.

Belongs to the Glu/Leu/Phe/Val dehydrogenases family. As to quaternary structure, homohexamer.

It catalyses the reaction L-glutamate + NADP(+) + H2O = 2-oxoglutarate + NH4(+) + NADPH + H(+). In terms of biological role, catalyzes the reversible oxidative deamination of glutamate to alpha-ketoglutarate and ammonia. The sequence is that of NADP-specific glutamate dehydrogenase (gdhA) from Haemophilus influenzae (strain ATCC 51907 / DSM 11121 / KW20 / Rd).